Consider the following 68-residue polypeptide: Small ribosomal subunit protein bS18c (68 aa).

This sequence belongs to the bacterial ribosomal protein bS18 family. In terms of assembly, part of the 30S ribosomal subunit.

The protein localises to the plastid. The protein resides in the chloroplast. This chain is Small ribosomal subunit protein bS18c (rps18), found in Cyanidium caldarium (Red alga).